A 199-amino-acid chain; its full sequence is ATP-dependent Clp protease proteolytic subunit (199 aa).

The Nucleophile role is filled by Ser-97. The active site involves His-122.

This sequence belongs to the peptidase S14 family. As to quaternary structure, fourteen ClpP subunits assemble into 2 heptameric rings which stack back to back to give a disk-like structure with a central cavity, resembling the structure of eukaryotic proteasomes.

It is found in the cytoplasm. The enzyme catalyses Hydrolysis of proteins to small peptides in the presence of ATP and magnesium. alpha-casein is the usual test substrate. In the absence of ATP, only oligopeptides shorter than five residues are hydrolyzed (such as succinyl-Leu-Tyr-|-NHMec, and Leu-Tyr-Leu-|-Tyr-Trp, in which cleavage of the -Tyr-|-Leu- and -Tyr-|-Trp bonds also occurs).. Functionally, cleaves peptides in various proteins in a process that requires ATP hydrolysis. Has a chymotrypsin-like activity. Plays a major role in the degradation of misfolded proteins. The polypeptide is ATP-dependent Clp protease proteolytic subunit (Geobacter metallireducens (strain ATCC 53774 / DSM 7210 / GS-15)).